The chain runs to 419 residues: MFKVKDLLLSPTTFEDPIFGTHLRYFQWYGYVASKDQNRPLLSLIRCTILTASIWLSCALMLARVFRGYENLNDGATSYATAVQYFAVSIAMFNAYVQRDKVISLLRVAHSDIQNLMHEADNREMELLVATQAYTRTITLLIWIPSVIAGLMAYSDCIYRSLFLPKSVFNVPAVRRGEEHPILLFQLFPFGELCDNFVVGYLGPWYALGLGITAIPLWHTFITCLMKYVNLKLQILNKRVEEMDITRLNSKLVIGRLTASELTFWQMQLFKEFVKEQLRIRKFVQELQYLICVPVMADFIIFSVLICFLFFALTVGVPSKMDYFFMFIYLFVMAGILWIYHWHATLIVECHDELSLAYFSCGWYNFEMPLQKMLVFMMMHAQRPMKMRALLVDLNLRTFIDIGRGAYSYFNLLRSSHLY.

Over 1 to 41 the chain is Cytoplasmic; that stretch reads MFKVKDLLLSPTTFEDPIFGTHLRYFQWYGYVASKDQNRPL. A helical transmembrane segment spans residues 42 to 62; that stretch reads LSLIRCTILTASIWLSCALML. Topologically, residues 63-76 are extracellular; the sequence is ARVFRGYENLNDGA. Residues 77–97 traverse the membrane as a helical segment; the sequence is TSYATAVQYFAVSIAMFNAYV. Topologically, residues 98–137 are cytoplasmic; it reads QRDKVISLLRVAHSDIQNLMHEADNREMELLVATQAYTRT. A helical transmembrane segment spans residues 138–158; that stretch reads ITLLIWIPSVIAGLMAYSDCI. Residues 159 to 196 are Extracellular-facing; sequence YRSLFLPKSVFNVPAVRRGEEHPILLFQLFPFGELCDN. Residues 197-217 form a helical membrane-spanning segment; the sequence is FVVGYLGPWYALGLGITAIPL. Residues 218 to 292 are Cytoplasmic-facing; sequence WHTFITCLMK…FVQELQYLIC (75 aa). A helical transmembrane segment spans residues 293 to 313; sequence VPVMADFIIFSVLICFLFFAL. Residues 314 to 323 are Extracellular-facing; the sequence is TVGVPSKMDY. A helical membrane pass occupies residues 324-344; that stretch reads FFMFIYLFVMAGILWIYHWHA. At 345–389 the chain is on the cytoplasmic side; sequence TLIVECHDELSLAYFSCGWYNFEMPLQKMLVFMMMHAQRPMKMRA. The helical transmembrane segment at 390 to 410 threads the bilayer; the sequence is LLVDLNLRTFIDIGRGAYSYF. At 411 to 419 the chain is on the extracellular side; it reads NLLRSSHLY.

Belongs to the insect chemoreceptor superfamily. Heteromeric odorant receptor channel (TC 1.A.69) family. Or30a subfamily. Interacts with Orco. Complexes exist early in the endomembrane system in olfactory sensory neurons (OSNs), coupling these complexes to the conserved ciliary trafficking pathway. As to expression, expressed in olfactory sensory neurons in the antenna.

It is found in the cell membrane. Functionally, odorant receptor which mediates acceptance or avoidance behavior, depending on its substrates. The odorant receptor repertoire encodes a large collection of odor stimuli that vary widely in identity, intensity, and duration. May form a complex with Orco to form odorant-sensing units, providing sensitive and prolonged odorant signaling and calcium permeability. Specific receptor for geosmin, a microbial odorant that constitutes an ecologically relevant stimulus that alerts flies to the presence of harmful microbes and induces avoidance behavior. This chain is Odorant receptor 56a (Or56a), found in Drosophila melanogaster (Fruit fly).